The primary structure comprises 283 residues: Probable voltage-dependent anion-selective channel (283 aa).

This sequence belongs to the eukaryotic mitochondrial porin family.

It is found in the mitochondrion outer membrane. Its function is as follows. Forms a channel through the cell membrane that allows diffusion of small hydrophilic molecules. Plays a role in maintaining mitochondrial morphology. The sequence is that of Probable voltage-dependent anion-selective channel from Caenorhabditis elegans.